The chain runs to 77 residues: Small ribosomal subunit protein bS18 (77 aa).

The protein belongs to the bacterial ribosomal protein bS18 family. In terms of assembly, part of the 30S ribosomal subunit. Forms a tight heterodimer with protein bS6.

Functionally, binds as a heterodimer with protein bS6 to the central domain of the 16S rRNA, where it helps stabilize the platform of the 30S subunit. The polypeptide is Small ribosomal subunit protein bS18 (Bacillus cytotoxicus (strain DSM 22905 / CIP 110041 / 391-98 / NVH 391-98)).